Consider the following 476-residue polypeptide: Calcium/calmodulin-dependent protein kinase type 1G (476 aa).

Positions 23–277 (FIFMEVLGSG…CEKALSHPWI (255 aa)) constitute a Protein kinase domain. Residues 29–37 (LGSGAFSEV) and Lys-52 each bind ATP. Asp-143 (proton acceptor) is an active-site residue. Residues 277–317 (IDGNTALHRDIYPSVSLQIQKNFAKSKWRQAFNAAAVVHHM) are autoinhibitory domain. The tract at residues 297–318 (KNFAKSKWRQAFNAAAVVHHMR) is calmodulin-binding. A disordered region spans residues 325 to 352 (HSPGVRPEVENRPPETQASETSRPSSPE). Residues 338–352 (PETQASETSRPSSPE) are compositionally biased toward polar residues.

This sequence belongs to the protein kinase superfamily. CAMK Ser/Thr protein kinase family. CaMK subfamily. May be prenylated on Cys-473. Mainly expressed in brain with small amounts in skeletal muscles, kidney, spleen and liver. Strongly expressed in forebrain neocortex, striatum and limbic system.

Its subcellular location is the cytoplasm. The protein localises to the golgi apparatus membrane. It localises to the cell membrane. The enzyme catalyses L-seryl-[protein] + ATP = O-phospho-L-seryl-[protein] + ADP + H(+). The catalysed reaction is L-threonyl-[protein] + ATP = O-phospho-L-threonyl-[protein] + ADP + H(+). Its activity is regulated as follows. Activated by Ca(2+)/calmodulin. Binding of calmodulin is thought to result in a conformational change and leads to activation through phosphorylation by CAMKK1. In terms of biological role, calcium/calmodulin-dependent protein kinase belonging to a proposed calcium-triggered signaling cascade. In vitro phosphorylates transcription factor CREB1. In Homo sapiens (Human), this protein is Calcium/calmodulin-dependent protein kinase type 1G (CAMK1G).